The following is a 505-amino-acid chain: MSEKYIVAIDQGTTSTRAIVFDHSGSIVSTGQLEHEQIFPRAGWVEHDPMEIWRNTREVIGQALSKADITRHDVEAVGITNQRETAVVWDRTTGKPVYNAIVWQDTRTQKIVDRLAADGGVERFKPTVGLPLATYFSGTKIVWILENVDGAREKAEAGELMFGTTDTWVLWNLTGGTDGGVHVTDVTNASRTLFMDLETLQWDDEILKAFDVPRSMLPEIKSSSEVYGQVESSSLLREVPIAGILGDQQAATFGQAAFDQGESKNTYGTGNFLIFNTGTDIIHSQNGLLTTLGYKLGDQEPHYALEGSIAVTGSLVQWMRDNLGLVSSAAEIETLAATVEDNGGVYFVPAFSGLFAPYWRSDARGALVGLTRYVNKGHIARAALEATAFQTREVLDAVNADSGVDLTELKVDGGMIANNLLMQFQADILGVPVVRPVVAETTALGAAYAAGLAVGFWKDLDDLRQNWQEDSRWTPDMDDAERERQLRLWKKAVTKTFDWVDDDVQ.

Residue Thr-13 coordinates ADP. Residues Thr-13, Thr-14, and Ser-15 each contribute to the ATP site. A sn-glycerol 3-phosphate-binding site is contributed by Thr-13. Arg-17 contributes to the ADP binding site. Arg-83, Glu-84, Tyr-135, and Asp-247 together coordinate sn-glycerol 3-phosphate. Glycerol-binding residues include Arg-83, Glu-84, Tyr-135, Asp-247, and Gln-248. ADP-binding residues include Thr-269 and Gly-313. The ATP site is built by Thr-269, Gly-313, Gln-317, and Gly-414. ADP is bound by residues Gly-414 and Asn-418.

Belongs to the FGGY kinase family.

The enzyme catalyses glycerol + ATP = sn-glycerol 3-phosphate + ADP + H(+). It participates in polyol metabolism; glycerol degradation via glycerol kinase pathway; sn-glycerol 3-phosphate from glycerol: step 1/1. Its activity is regulated as follows. Inhibited by fructose 1,6-bisphosphate (FBP). In terms of biological role, key enzyme in the regulation of glycerol uptake and metabolism. Catalyzes the phosphorylation of glycerol to yield sn-glycerol 3-phosphate. The polypeptide is Glycerol kinase (Clavibacter michiganensis subsp. michiganensis (strain NCPPB 382)).